The primary structure comprises 133 residues: Fatty acid-binding protein homolog 1 (133 aa).

Residue M1 is modified to N-acetylmethionine. Hexadecanoate is bound by residues R107 and 127-129; that span reads RTY.

The protein belongs to the calycin superfamily. Fatty-acid binding protein (FABP) family.

Functionally, has been implicated in the acquisition, storage, and transport of lipids, and may be important to the organism since it is incapable of synthesizing most of its lipids de novo. The sequence is that of Fatty acid-binding protein homolog 1 (FABP1) from Echinococcus granulosus (Hydatid tapeworm).